Reading from the N-terminus, the 134-residue chain is MSWQAYVDDHLMCDIEGHEGHRLTAAAIIGHDGSVWAQSATFPQFKPEEMNGIMTDFNEPGHLAPTGLHLGGTKYMVIQGEAGAVIRGKKGSGGITIKKTGQALVCGIYEEPVTPGQCNMVVERLGDYLLEQGL.

Residues cysteine 13 and cysteine 118 are joined by a disulfide bond. An Involved in PIP2 interaction motif is present at residues 84–100 (AVIRGKKGSGGITIKKT). Threonine 114 is modified (phosphothreonine).

The protein belongs to the profilin family. In terms of assembly, occurs in many kinds of cells as a complex with monomeric actin in a 1:1 ratio. Post-translationally, phosphorylated by MAP kinases.

It localises to the cytoplasm. Its subcellular location is the cytoskeleton. Functionally, binds to actin and affects the structure of the cytoskeleton. At high concentrations, profilin prevents the polymerization of actin, whereas it enhances it at low concentrations. This is Profilin-2 from Olea europaea (Common olive).